A 277-amino-acid chain; its full sequence is Putative phosphoenolpyruvate synthase regulatory protein (277 aa).

157 to 164 (GVSRSGKT) provides a ligand contact to ADP.

This sequence belongs to the pyruvate, phosphate/water dikinase regulatory protein family. PSRP subfamily.

It carries out the reaction [pyruvate, water dikinase] + ADP = [pyruvate, water dikinase]-phosphate + AMP + H(+). It catalyses the reaction [pyruvate, water dikinase]-phosphate + phosphate + H(+) = [pyruvate, water dikinase] + diphosphate. Bifunctional serine/threonine kinase and phosphorylase involved in the regulation of the phosphoenolpyruvate synthase (PEPS) by catalyzing its phosphorylation/dephosphorylation. In Aromatoleum aromaticum (strain DSM 19018 / LMG 30748 / EbN1) (Azoarcus sp. (strain EbN1)), this protein is Putative phosphoenolpyruvate synthase regulatory protein.